The sequence spans 619 residues: MKYFKGISFYIIIFILILVIITFFTATDNPPKMSYSELLTEMKAGNVKSIGLQTDTATIELKKPKENNRTKFVVIVPPDVTSASERFTAALDNKLIEDFHVTQPPQPPWWVSMLPTVGLVIILILIWFFFIQQSQGGGGGNRVMSFGKSRAKMTVDDKKKITFENVAGADEEKEELAEIVEFLKAPKKFVELGARIPKGVLLVGPPGTGKTLLAKAVSGEAGVPFFSISGSDFVEMFVGVGASRVRDLFEQAKKNAPCIVFIDEIDAVGRHRGAGLGGGHDEREQTLNQLLVEMDGFGINEGVIILAATNRPDILDPALLRPGRFDRRVVVGLPDIKGREQILKVHSRGKPLADDVRLDDLARITPGFTGADIENLLNEAALLTARANKKKIGNEEIKEAAFKVMMGPEKKSRVMSEHDKKVTAYHEAGHAIAIKLVSSSQKVDRVSIIPAGMAGGYTASRPQEDKSYHTRSQLIEEIIIALGGRAAEEITMDEVSTGASSDLKKVNQIARNMVTKYGMSEKLGNMIFGNDNDEVFIGRDLAQARNYSDELAAIIDNEVKSIIDNAYQKTVSLLRENIVRLNKLAEVLLEKEKVEGAEFEEIFENAVLEGSSQTPQLEG.

The Cytoplasmic portion of the chain corresponds to 1–5; the sequence is MKYFK. Residues 6 to 26 traverse the membrane as a helical segment; it reads GISFYIIIFILILVIITFFTA. Residues 27 to 110 are Extracellular-facing; it reads TDNPPKMSYS…VTQPPQPPWW (84 aa). The chain crosses the membrane as a helical span at residues 111–131; sequence VSMLPTVGLVIILILIWFFFI. The Cytoplasmic segment spans residues 132–619; sequence QQSQGGGGGN…GSSQTPQLEG (488 aa). 204–211 lines the ATP pocket; that stretch reads GPPGTGKT. A Zn(2+)-binding site is contributed by His426. Glu427 is a catalytic residue. Residues His430 and Asp502 each coordinate Zn(2+).

In the central section; belongs to the AAA ATPase family. This sequence in the C-terminal section; belongs to the peptidase M41 family. As to quaternary structure, homohexamer. The cofactor is Zn(2+).

Its subcellular location is the cell membrane. In terms of biological role, acts as a processive, ATP-dependent zinc metallopeptidase for both cytoplasmic and membrane proteins. Plays a role in the quality control of integral membrane proteins. The sequence is that of ATP-dependent zinc metalloprotease FtsH from Ruminiclostridium cellulolyticum (strain ATCC 35319 / DSM 5812 / JCM 6584 / H10) (Clostridium cellulolyticum).